A 193-amino-acid chain; its full sequence is MGSSFFGRPKMGGSSSSSPTSSSSSPAKRGKNKNGSDKPKQPQRGLGVAQLEKIRLHGEYNCNSFNTYPSYHPSTYQEDVRIQGGYPSIPSSSPSFSYASSSPPPAPYGFHPNMMMNANNDQYERTTIRYGDSQPHRAPSWNPSYGILESQHFVEPNTTRHFLHEDQRNISLGSGIQNFETSEANELDLELRL.

Disordered regions lie at residues 1–50 and 85–104; these read MGSS…GVAQ and GYPS…SSPP. Residues 14 to 26 are compositionally biased toward low complexity; that stretch reads SSSSSPTSSSSSP. The SPL motif lies at 44–52; it reads RGLGVAQLE. The span at 86 to 101 shows a compositional bias: low complexity; it reads YPSIPSSSPSFSYASS. The short motif at 187 to 193 is the EAR element; that stretch reads LDLELRL.

In terms of assembly, interacts with TPL and the TPR corepressors TPR1, TPR2, TPR3, TPR4, and with the TCP transcription factors TCP2, TCP3, TCP4, TCP5, TCP10, TCP13, TCP17 and TCP24. Interacts with SPL and SPEAR2. In terms of tissue distribution, expressed in shoot apical meristem, cotyledons and leaves. Detected at the leaf margins and in the vascular bundles at the base of the leaves.

The protein resides in the nucleus. In terms of biological role, transcriptional regulator of leaf development. Acts as an adapter-like transcriptional repressor recruiting TPL/TPR corepressors to inhibit the CIN-like TCP transcription factors. The protein is Protein SPEAR3 of Arabidopsis thaliana (Mouse-ear cress).